We begin with the raw amino-acid sequence, 346 residues long: MSTANHFQRILEKLSISDNERAVYTKEAEEIQNYVVDELKRVDKTFRQVFDGLSLGGSYLDRVKLNLPDEFDLHMKLKFPFDIRPTRIDQGFIYLEADLTVINPQRIHRIVLQDWLRNAFRKVFRSNQTIATTSNRVYKLTYTLEGYGCAHTILAVCGSRSISFDLVPAFEFSGSQWPFDICPVPADVSNNWPWFAIPQQKKKSAKPRTTFMVCAPHWEREIMKGKDNLKNVLRLMKGLRDAHARKLPHLSSYMLKTVLLHRLESADWERDLGTLLVEMWSHLVDHLRARRLEFFLAKDHNVFNRMNQNEIKICLENASTLLRKLCIAQTCGGSYHHVAQLFNIPN.

ATP contacts are provided by residues serine 58 and 70–72; that span reads EFD. Mg(2+) contacts are provided by glutamate 70, aspartate 72, and aspartate 165. Residues aspartate 165 and 212-219 each bind GTP; that span reads MVCAPHWE. ATP is bound by residues 216 to 219, lysine 237, and 252 to 256; these read PHWE and SYMLK.

Belongs to the mab-21 family. The cofactor is Mg(2+). It depends on Mn(2+) as a cofactor.

With respect to regulation, activated in response of some unknown stimulus. Not activated in response to L-monocytogenes infection. In terms of biological role, probable nucleotidyltransferase that catalyzes the formation of cyclic dinucleotide second messenger in response to some unknown stimulus. Does not catalyze the formation of cyclic GMP-AMP from ATP and GTP. This is Cyclic GMP-AMP synthase-like protein from Drosophila melanogaster (Fruit fly).